We begin with the raw amino-acid sequence, 59 residues long: MRCVPVFIILLLLIPSAPSAAVQPKTEKDDVPLASFHDSAMRILSRQCCPTIPECCRVG.

The N-terminal stretch at M1–V22 is a signal peptide. Positions Q23–R46 are excised as a propeptide. Residue Q47 is modified to Pyrrolidone carboxylic acid. Position 58 is a valine amide (V58).

Post-translationally, contains 2 disulfide bonds that can be either 'C1-C3, C2-C4' or 'C1-C4, C2-C3', since these disulfide connectivities have been observed for conotoxins with cysteine framework V (for examples, see AC P0DQQ7 and AC P81755). In terms of tissue distribution, expressed by the venom duct.

The protein localises to the secreted. The polypeptide is Conotoxin ViVB (Conus virgo (Virgin cone)).